We begin with the raw amino-acid sequence, 256 residues long: Ubiquinone/menaquinone biosynthesis C-methyltransferase UbiE (256 aa).

S-adenosyl-L-methionine contacts are provided by residues threonine 79, aspartate 100, and 128–129 (DA).

The protein belongs to the class I-like SAM-binding methyltransferase superfamily. MenG/UbiE family.

The catalysed reaction is a 2-demethylmenaquinol + S-adenosyl-L-methionine = a menaquinol + S-adenosyl-L-homocysteine + H(+). The enzyme catalyses a 2-methoxy-6-(all-trans-polyprenyl)benzene-1,4-diol + S-adenosyl-L-methionine = a 5-methoxy-2-methyl-3-(all-trans-polyprenyl)benzene-1,4-diol + S-adenosyl-L-homocysteine + H(+). The protein operates within quinol/quinone metabolism; menaquinone biosynthesis; menaquinol from 1,4-dihydroxy-2-naphthoate: step 2/2. It participates in cofactor biosynthesis; ubiquinone biosynthesis. Methyltransferase required for the conversion of demethylmenaquinol (DMKH2) to menaquinol (MKH2) and the conversion of 2-polyprenyl-6-methoxy-1,4-benzoquinol (DDMQH2) to 2-polyprenyl-3-methyl-6-methoxy-1,4-benzoquinol (DMQH2). In Pseudomonas savastanoi pv. phaseolicola (strain 1448A / Race 6) (Pseudomonas syringae pv. phaseolicola (strain 1448A / Race 6)), this protein is Ubiquinone/menaquinone biosynthesis C-methyltransferase UbiE.